The sequence spans 80 residues: U4-theraphotoxin-Spl1a (80 aa).

The N-terminal stretch at 1-21 (MKASLFAVIFGLVVLCACSFA) is a signal peptide. A propeptide spanning residues 22 to 50 (EDQFASPNELLKSMFVESTHELTPEVEGR) is cleaved from the precursor. Cystine bridges form between Cys52–Cys66, Cys59–Cys71, and Cys65–Cys75. Leu79 bears the Leucine amide mark.

The protein belongs to the neurotoxin 30 (phrixotoxin) family. As to expression, expressed by the venom gland.

The protein resides in the secreted. Functionally, probable ion channel inhibitor. Shows insecticidal activity when injected into mealworms. The chain is U4-theraphotoxin-Spl1a from Selenotypus plumipes (Australian featherleg tarantula).